The following is a 295-amino-acid chain: tRNA pseudouridine synthase B (295 aa).

Asp42 acts as the Nucleophile in catalysis.

The protein belongs to the pseudouridine synthase TruB family. Type 1 subfamily.

The catalysed reaction is uridine(55) in tRNA = pseudouridine(55) in tRNA. In terms of biological role, responsible for synthesis of pseudouridine from uracil-55 in the psi GC loop of transfer RNAs. This chain is tRNA pseudouridine synthase B, found in Cutibacterium acnes (strain DSM 16379 / KPA171202) (Propionibacterium acnes).